Consider the following 186-residue polypeptide: uncharacterized protein (186 aa).

Disordered stretches follow at residues 17 to 47 (LSGE…EETF), 77 to 105 (EDKL…AAEA), and 121 to 164 (QQAA…PVAG). The span at 90–105 (PLAARPPSQAAAAAEA) shows a compositional bias: low complexity. Over residues 136–149 (PEPDPEPADEAAEE) the composition is skewed to acidic residues.

This is an uncharacterized protein from Homo sapiens (Human).